We begin with the raw amino-acid sequence, 1228 residues long: P3N-PIPO polyprotein (1228 aa).

The 140-residue stretch at 408-547 (IVGNSKINYI…RSVYAKMDQY (140 aa)) folds into the Peptidase S30 domain. Catalysis depends on for P1 proteinase activity residues H456, D465, and S499. The Involved in interaction with stylet and aphid transmission signature appears at 598–601 (KITC). The short motif at 856 to 858 (PTK) is the Involved in virions binding and aphid transmission element. The 123-residue stretch at 882 to 1004 (MYIAKKGYCY…DSEMKHYIVG (123 aa)) folds into the Peptidase C6 domain. Catalysis depends on for helper component proteinase activity residues C890 and H963.

Belongs to the potyviridae P3N-PIPO polyprotein family. As to quaternary structure, interacts (via PIPO domain) with host PCaP1 protein; this interaction may help to anchor the movement complex to the plasma membrane from which the complex could move to the plasmodesmata. Potyviral RNA is expressed as two polyproteins which undergo post-translational proteolytic processing. Genome polyprotein is processed by NIa-pro, P1 and HC-pro proteinases resulting in the production of at least ten individual proteins. P3N-PIPO is cleaved by P1 and HC-pro proteinases resulting in the production of three individual proteins. The P1 proteinase and the HC-pro cleave only their respective C-termini autocatalytically.

The protein resides in the host cell junction. It is found in the host plasmodesma. It carries out the reaction Hydrolyzes a Gly-|-Gly bond at its own C-terminus, commonly in the sequence -Tyr-Xaa-Val-Gly-|-Gly, in the processing of the potyviral polyprotein.. In terms of biological role, required for aphid transmission and also has proteolytic activity. Only cleaves a Gly-Gly dipeptide at its own C-terminus. Interacts with virions and aphid stylets. Acts as a suppressor of RNA-mediated gene silencing, also known as post-transcriptional gene silencing (PTGS), a mechanism of plant viral defense that limits the accumulation of viral RNAs. May have RNA-binding activity. Functionally, allows efficient cell to cell propagation, by bypassing the host cell wall barrier. Transports viral genome to neighboring plant cells directly through plasmosdesmata, without any budding. The protein is P3N-PIPO polyprotein of Carica papaya (Papaya).